Reading from the N-terminus, the 187-residue chain is Large ribosomal subunit protein uL22 (187 aa).

This sequence belongs to the universal ribosomal protein uL22 family.

In Theileria annulata, this protein is Large ribosomal subunit protein uL22 (RPL17).